The sequence spans 354 residues: UDP-glucose 4-epimerase GEPI42 (354 aa).

NAD(+) is bound at residue 11 to 42 (TILVTGGAGFIGSHTVVQLLKQGFHVSIIDNL). Residue serine 137 participates in substrate binding. The active-site Proton acceptor is tyrosine 161.

Belongs to the NAD(P)-dependent epimerase/dehydratase family. The cofactor is NAD(+).

The catalysed reaction is UDP-alpha-D-glucose = UDP-alpha-D-galactose. Its pathway is carbohydrate metabolism; galactose metabolism. The sequence is that of UDP-glucose 4-epimerase GEPI42 from Cyamopsis tetragonoloba (Guar).